A 231-amino-acid chain; its full sequence is 7-cyano-7-deazaguanine synthase (231 aa).

ATP is bound at residue 8 to 18; sequence LSGGLDSATAA. Residues C189, C197, C200, and C203 each coordinate Zn(2+).

This sequence belongs to the QueC family. Zn(2+) is required as a cofactor.

The enzyme catalyses 7-carboxy-7-deazaguanine + NH4(+) + ATP = 7-cyano-7-deazaguanine + ADP + phosphate + H2O + H(+). It participates in purine metabolism; 7-cyano-7-deazaguanine biosynthesis. Functionally, catalyzes the ATP-dependent conversion of 7-carboxy-7-deazaguanine (CDG) to 7-cyano-7-deazaguanine (preQ(0)). The sequence is that of 7-cyano-7-deazaguanine synthase from Synechococcus elongatus (strain ATCC 33912 / PCC 7942 / FACHB-805) (Anacystis nidulans R2).